The primary structure comprises 81 residues: uncharacterized protein (81 aa).

This is an uncharacterized protein from Bacillus subtilis (strain 168).